The following is a 342-amino-acid chain: HTH-type transcriptional regulator GbpR (342 aa).

Positions 16–73 (LKLRHLQLFVALDEHRNLHRAAASLTMSQPAASKLLGDLEESLGVTLFERHGRGVEPN) constitute an HTH lysR-type domain. Residues 33-52 (LHRAAASLTMSQPAASKLLG) constitute a DNA-binding region (H-T-H motif).

The protein belongs to the LysR transcriptional regulatory family.

Its function is as follows. Does not seem to be required for sbpA expression. This Azospirillum brasilense protein is HTH-type transcriptional regulator GbpR (gbpR).